The chain runs to 226 residues: MTLLILLRHGQSVWNQKNLFTGWVDIPLSQQGIQEALTAGEAIKNLPIDCIFTSTLVRSLMTALLAMTNHSSKKIPYIIHEERPDMSRIHSEKELEQMIPLFQSSALNERMYGELQGKNKQEVAEQFGEEQVRLWRRSYKIAPPQGESLFDTAQRTLPYFQKRIFPLIQQGKNIFISAHGNSLRSLIMDLEKLTEEEVLSLELPTGKPIVYEWTEQKFTKSALSFG.

Residues 8–15 (RHGQSVWN), 21–22 (TG), Arg58, 109–112 (ERMY), Lys120, 136–137 (RR), and 180–181 (GN) each bind substrate. His9 (tele-phosphohistidine intermediate) is an active-site residue. The active-site Proton donor/acceptor is Glu109.

This sequence belongs to the phosphoglycerate mutase family. BPG-dependent PGAM subfamily.

It carries out the reaction (2R)-2-phosphoglycerate = (2R)-3-phosphoglycerate. It participates in carbohydrate degradation; glycolysis; pyruvate from D-glyceraldehyde 3-phosphate: step 3/5. Functionally, catalyzes the interconversion of 2-phosphoglycerate and 3-phosphoglycerate. This chain is 2,3-bisphosphoglycerate-dependent phosphoglycerate mutase, found in Chlamydia muridarum (strain MoPn / Nigg).